The primary structure comprises 824 residues: Leucine--tRNA ligase (824 aa).

The 'HIGH' region signature appears at 42-52; it reads PYPSGRIHMGH. Residues 581 to 585 carry the 'KMSKS' region motif; that stretch reads KMSKS. K584 provides a ligand contact to ATP.

Belongs to the class-I aminoacyl-tRNA synthetase family.

It is found in the cytoplasm. The catalysed reaction is tRNA(Leu) + L-leucine + ATP = L-leucyl-tRNA(Leu) + AMP + diphosphate. This is Leucine--tRNA ligase from Geotalea daltonii (strain DSM 22248 / JCM 15807 / FRC-32) (Geobacter daltonii).